Consider the following 454-residue polypeptide: Argininosuccinate lyase (454 aa).

This sequence belongs to the lyase 1 family. Argininosuccinate lyase subfamily.

The protein localises to the cytoplasm. The catalysed reaction is 2-(N(omega)-L-arginino)succinate = fumarate + L-arginine. The protein operates within amino-acid biosynthesis; L-arginine biosynthesis; L-arginine from L-ornithine and carbamoyl phosphate: step 3/3. The sequence is that of Argininosuccinate lyase from Herpetosiphon aurantiacus (strain ATCC 23779 / DSM 785 / 114-95).